A 758-amino-acid polypeptide reads, in one-letter code: Relaxin receptor 1 (758 aa).

The Extracellular portion of the chain corresponds to 1–408 (MTSGPFFFCV…LENLLASIIQ (408 aa)). In terms of domain architecture, LDL-receptor class A spans 26-63 (SCPLGSFPCGNISKCLPQLLHCNGVDDCGNQADEDNCG). 3 disulfides stabilise this stretch: Cys27-Cys40, Cys34-Cys53, and Cys47-Cys62. Asn36 carries N-linked (GlcNAc...) asparagine glycosylation. Ca(2+)-binding residues include Leu45, Asn48, Val50, Asp52, Asp58, and Glu59. LRR repeat units lie at residues 105 to 125 (LCRD…PSVS), 126 to 148 (SNVT…SFRK), 149 to 172 (YHDL…AFRG), 173 to 196 (LHSL…VFED), 198 to 220 (HRLE…TFYG), 221 to 244 (LNSL…PLCQ), 246 to 269 (MPRL…TFIS), 270 to 293 (CNNL…AFTH), 294 to 317 (LQKL…IFKD), 319 to 341 (KELS…QFDY), and 342 to 365 (LAKL…MFRP). Residue Asn127 is glycosylated (N-linked (GlcNAc...) asparagine). N-linked (GlcNAc...) asparagine glycans are attached at residues Asn264 and Asn272. N-linked (GlcNAc...) asparagine glycosylation is present at Asn325. Residue Asn368 is glycosylated (N-linked (GlcNAc...) asparagine). A helical membrane pass occupies residues 409–429 (RVFVWVVSAITCFGNIFVICM). Residues 430–443 (RPYIRSENKLHAMS) are Cytoplasmic-facing. Residues 444-464 (IMSLCCADCLMGVYLFVIGAF) traverse the membrane as a helical segment. Residues 465 to 486 (DLKFRGEYRKHAQPWMESVHCQ) lie on the Extracellular side of the membrane. An intrachain disulfide couples Cys485 to Cys563. Residues 487-507 (FMGSLAVLSTEVSVLLLTFLT) form a helical membrane-spanning segment. Residues 508–527 (LEKYICIVYPFRCLRPRKCR) lie on the Cytoplasmic side of the membrane. The helical transmembrane segment at 528 to 548 (TVAVLIFIWITGFIVAFAPLG) threads the bilayer. At 549–577 (NKEFFKNYYGTNGVCFPLHSEDTGSTGAQ) the chain is on the extracellular side. A helical transmembrane segment spans residues 578-598 (IYSVVIFLGINLVAFIIIVFS). The Cytoplasmic segment spans residues 599–629 (YGSMFYSVHQSTITATEIQKQVKKEMILAKR). A helical transmembrane segment spans residues 630–650 (FFFIVFTDALCWIPIFILKFL). At 651 to 660 (SLIRVEIPDT) the chain is on the extracellular side. A helical transmembrane segment spans residues 661–681 (ITSWVVIFILPINSALNPIIY). Residues 682–758 (TLTTRPFKEM…SRSSRLNSYS (77 aa)) lie on the Cytoplasmic side of the membrane.

It belongs to the G-protein coupled receptor 1 family. In terms of assembly, interacts with C1QTNF8. As to expression, detected in brain cortex, and at low levels in testis.

The protein resides in the cell membrane. In terms of biological role, receptor for relaxins. The activity of this receptor is mediated by G proteins leading to stimulation of adenylate cyclase and an increase of cAMP. Binding of the ligand may also activate a tyrosine kinase pathway that inhibits the activity of a phosphodiesterase that degrades cAMP. The chain is Relaxin receptor 1 (Rxfp1) from Rattus norvegicus (Rat).